The chain runs to 201 residues: tRNA (guanine-N(7)-)-methyltransferase (201 aa).

Residues Glu34, Glu59, Asp86, and Asp107 each contribute to the S-adenosyl-L-methionine site. Asp107 is a catalytic residue. Residues Lys111, Asp143, and 181–184 each bind substrate; that span reads TDYE.

This sequence belongs to the class I-like SAM-binding methyltransferase superfamily. TrmB family.

The enzyme catalyses guanosine(46) in tRNA + S-adenosyl-L-methionine = N(7)-methylguanosine(46) in tRNA + S-adenosyl-L-homocysteine. Its pathway is tRNA modification; N(7)-methylguanine-tRNA biosynthesis. Catalyzes the formation of N(7)-methylguanine at position 46 (m7G46) in tRNA. The protein is tRNA (guanine-N(7)-)-methyltransferase of Mycoplasma mobile (strain ATCC 43663 / 163K / NCTC 11711) (Mesomycoplasma mobile).